Here is a 160-residue protein sequence, read N- to C-terminus: Phosphopantetheine adenylyltransferase (160 aa).

Position 11 (Thr11) interacts with substrate. ATP-binding positions include 11 to 12 (TF) and His19. Residues Lys43, Leu75, and Arg89 each contribute to the substrate site. Residues 90–92 (GLR), Glu100, and 125–131 (HMFVSAS) contribute to the ATP site.

It belongs to the bacterial CoaD family. As to quaternary structure, homohexamer. It depends on Mg(2+) as a cofactor.

Its subcellular location is the cytoplasm. The catalysed reaction is (R)-4'-phosphopantetheine + ATP + H(+) = 3'-dephospho-CoA + diphosphate. The protein operates within cofactor biosynthesis; coenzyme A biosynthesis; CoA from (R)-pantothenate: step 4/5. Functionally, reversibly transfers an adenylyl group from ATP to 4'-phosphopantetheine, yielding dephospho-CoA (dPCoA) and pyrophosphate. In Methylobacillus flagellatus (strain ATCC 51484 / DSM 6875 / VKM B-1610 / KT), this protein is Phosphopantetheine adenylyltransferase.